The primary structure comprises 434 residues: Cytochrome c biogenesis protein CcsB (434 aa).

Helical transmembrane passes span 15–35, 73–93, and 163–183; these read LRVAIVLLLLIAACSGLGTAI, SNWFLLLLAWLGLALLLCSLR, and VGPLLVHTGLIVFMVGAVVGA.

The protein belongs to the Ccs1/CcsB family. May interact with CcsA.

The protein localises to the cellular thylakoid membrane. Its function is as follows. Required during biogenesis of c-type cytochromes (cytochrome c6 and cytochrome f) at the step of heme attachment. The chain is Cytochrome c biogenesis protein CcsB from Synechococcus sp. (strain RCC307).